Reading from the N-terminus, the 127-residue chain is Holo-[acyl-carrier-protein] synthase (127 aa).

2 residues coordinate Mg(2+): D9 and E58.

This sequence belongs to the P-Pant transferase superfamily. AcpS family. It depends on Mg(2+) as a cofactor.

The protein resides in the cytoplasm. It carries out the reaction apo-[ACP] + CoA = holo-[ACP] + adenosine 3',5'-bisphosphate + H(+). Functionally, transfers the 4'-phosphopantetheine moiety from coenzyme A to a Ser of acyl-carrier-protein. This Shewanella sp. (strain W3-18-1) protein is Holo-[acyl-carrier-protein] synthase.